We begin with the raw amino-acid sequence, 507 residues long: Maturase K (507 aa).

Belongs to the intron maturase 2 family. MatK subfamily.

It is found in the plastid. The protein resides in the chloroplast. Its function is as follows. Usually encoded in the trnK tRNA gene intron. Probably assists in splicing its own and other chloroplast group II introns. The chain is Maturase K from Kalmia buxifolia (Sand myrtle).